Reading from the N-terminus, the 298-residue chain is uncharacterized protein (298 aa).

This is an uncharacterized protein from Methanocaldococcus jannaschii (strain ATCC 43067 / DSM 2661 / JAL-1 / JCM 10045 / NBRC 100440) (Methanococcus jannaschii).